The sequence spans 942 residues: Protein inturned (942 aa).

The segment at 1 to 52 (MASVASCDSRPSSDELPGDPSSQEEDEDYDFEDRVSDSGSYSSASSDYDDLE) is disordered. The segment covering 22 to 31 (SQEEDEDYDF) has biased composition (acidic residues). Positions 37–46 (DSGSYSSASS) are enriched in low complexity. The PDZ domain occupies 185–263 (LVGIIHQTKW…PMQVKLTFEN (79 aa)). Residues serine 670 and serine 674 each carry the phosphoserine modification. Residues 704-754 (TRKPSPSCSSGGSDNGCEGGEDDGFSPHTTPDAVRKQRESQGSDGLEESGT) form a disordered region.

It belongs to the inturned family. In terms of assembly, component of the CPLANE (ciliogenesis and planar polarity effectors) complex, composed of INTU, FUZ and WDPCP. Interacts with CPLANE1. Interacts with NPHP4 and DAAM1; INTU is mediating the interaction between NPHP4 and DAAM1.

The protein localises to the cytoplasm. It is found in the cell surface. Its subcellular location is the cytoskeleton. The protein resides in the cilium basal body. It localises to the microtubule organizing center. The protein localises to the centrosome. It is found in the centriole. Plays a key role in ciliogenesis and embryonic development. Regulator of cilia formation by controlling the organization of the apical actin cytoskeleton and the positioning of the basal bodies at the apical cell surface, which in turn is essential for the normal orientation of elongating ciliary microtubules. Plays a key role in definition of cell polarity via its role in ciliogenesis but not via conversion extension. Has an indirect effect on hedgehog signaling. Proposed to function as core component of the CPLANE (ciliogenesis and planar polarity effectors) complex involved in the recruitment of peripheral IFT-A proteins to basal bodies. Required for recruitment of CPLANE2 to the mother centriole. Binds phosphatidylinositol 3-phosphate with highest affinity, followed by phosphatidylinositol 4-phosphate and phosphatidylinositol 5-phosphate. The sequence is that of Protein inturned (INTU) from Homo sapiens (Human).